The following is a 778-amino-acid chain: Receptor like protein 28 (778 aa).

An N-terminal signal peptide occupies residues 1 to 24 (MSGSHLRLRFLSLLLLCCVSSSTS). Over 25–739 (SLFTFSYPVL…EEQEQVLNWK (715 aa)) the chain is Extracellular. Asn-60, Asn-72, Asn-93, Asn-106, Asn-111, Asn-147, Asn-170, and Asn-173 each carry an N-linked (GlcNAc...) asparagine glycan. LRR repeat units lie at residues 99–123 (FHQL…EFGN), 125–147 (NKVE…SFSN), 148–171 (LSQL…VQNL), 172–195 (TNLS…LLMM), and 197–219 (FLSY…TSSK). One copy of the LRR 6; degenerate repeat lies at 220-240 (LEILYLGLKPFEGQILEPISK). LRR repeat units lie at residues 241–265 (LINL…LFSS), 266–291 (LKSL…LYIP), 293–313 (TLEK…ILKT), 314–338 (LQKL…LWRL), 340–363 (RLRS…VLVN), and 364–387 (SSME…PLSI). The N-linked (GlcNAc...) asparagine glycan is linked to Asn-253. N-linked (GlcNAc...) asparagine glycosylation is found at Asn-348 and Asn-363. The stretch at 388–407 (KAFSAGYNNFSGEIPLSICN) is one LRR 13; degenerate repeat. Asn-396, Asn-407, Asn-420, Asn-431, and Asn-476 each carry an N-linked (GlcNAc...) asparagine glycan. LRR repeat units follow at residues 408–429 (RSSL…PQCL), 430–453 (SNLT…LCAG), 455–477 (SLQT…LLNC), 479–500 (SLEF…WLKA), 501–525 (LPNL…HQSP), 528–552 (FPEL…YFVN), 601–625 (LNSY…IGLL), 626–649 (KELI…LANA), 650–673 (TELE…LKTL), and 678–700 (YINV…SSFE). Residues Asn-632 and Asn-648 are each glycosylated (N-linked (GlcNAc...) asparagine). Asn-680 carries N-linked (GlcNAc...) asparagine glycosylation. Residues 740-760 (AVATGYGTGLLLGLAIAQVIA) traverse the membrane as a helical segment. Residues 761-778 (SYKPDWLVKIIGLFRFCF) are Cytoplasmic-facing.

Belongs to the RLP family.

It localises to the cell membrane. The polypeptide is Receptor like protein 28 (Arabidopsis thaliana (Mouse-ear cress)).